The chain runs to 466 residues: Alpha-1A adrenergic receptor (466 aa).

Topologically, residues 1–25 (MVFLSGNASDSSNCTQPPAPVNIPK) are extracellular. 2 N-linked (GlcNAc...) asparagine glycosylation sites follow: Asn-7 and Asn-13. Residues 26–51 (AILLGVILGVLILFGVPGNILVILSV) traverse the membrane as a helical segment. Residues 52–63 (ACHRHLHSVTHY) lie on the Cytoplasmic side of the membrane. A helical transmembrane segment spans residues 64–89 (YIVNLAVADLLLTSTVLPFSAIFEIL). Residues 90–99 (GYWAFGRVFC) lie on the Extracellular side of the membrane. Residues 100 to 122 (NIWAAVDVLCCTASIMSLCIISI) traverse the membrane as a helical segment. Topologically, residues 123–143 (DRYIGVSYPLRYPTIVTQRRG) are cytoplasmic. A helical transmembrane segment spans residues 144-168 (LRALLCLWALSLVISIGPLFGWRQP). Residues 169-181 (APQDETICQINED) are Extracellular-facing. Residues 182–205 (PSYVLFSALGSFYVPLAIILVMYC) traverse the membrane as a helical segment. At 206–272 (RVYVVAKRES…KFSREKKAAK (67 aa)) the chain is on the cytoplasmic side. A helical membrane pass occupies residues 273-297 (TLGIVVGCFVLCWLPFFLVMPIGSF). Topologically, residues 298–304 (FPDFKPS) are extracellular. The helical transmembrane segment at 305–329 (ETVFKIVFWLGYLNSCINPIIYPCS) threads the bilayer. Topologically, residues 330–466 (SQEFKKAFQN…ISLSENGEEV (137 aa)) are cytoplasmic. Residues 334-349 (KKAFQNVLKIQCLRRK) carry the Nuclear localization signal motif. A lipid anchor (S-palmitoyl cysteine) is attached at Cys-345.

It belongs to the G-protein coupled receptor 1 family. Adrenergic receptor subfamily. ADRA1A sub-subfamily. In terms of assembly, homo- and heterooligomer. Heterooligomerizes with ADRA1B homooligomers in cardiac myocytes. Interacts with CAVIN4.

Its subcellular location is the nucleus membrane. It localises to the cell membrane. The protein resides in the cytoplasm. The protein localises to the membrane. It is found in the caveola. This alpha-adrenergic receptor mediates its action by association with G proteins that activate a phosphatidylinositol-calcium second messenger system. Its effect is mediated by G(q) and G(11) proteins. Nuclear ADRA1A-ADRA1B heterooligomers regulate phenylephrine (PE)-stimulated ERK signaling in cardiac myocytes. The chain is Alpha-1A adrenergic receptor (ADRA1A) from Cavia porcellus (Guinea pig).